Consider the following 475-residue polypeptide: Ribulose bisphosphate carboxylase large chain (475 aa).

Positions 1–2 are excised as a propeptide; it reads MS. An N-acetylproline modification is found at Pro3. At Lys14 the chain carries N6,N6,N6-trimethyllysine. Substrate is bound by residues Asn123 and Thr173. Catalysis depends on Lys175, which acts as the Proton acceptor. Lys177 contacts substrate. Lys201, Asp203, and Glu204 together coordinate Mg(2+). Lys201 is modified (N6-carboxylysine). The active-site Proton acceptor is His294. Substrate contacts are provided by Arg295, His327, and Ser379.

This sequence belongs to the RuBisCO large chain family. Type I subfamily. Heterohexadecamer of 8 large chains and 8 small chains; disulfide-linked. The disulfide link is formed within the large subunit homodimers. Requires Mg(2+) as cofactor. In terms of processing, the disulfide bond which can form in the large chain dimeric partners within the hexadecamer appears to be associated with oxidative stress and protein turnover.

The protein localises to the plastid. Its subcellular location is the chloroplast. The catalysed reaction is 2 (2R)-3-phosphoglycerate + 2 H(+) = D-ribulose 1,5-bisphosphate + CO2 + H2O. The enzyme catalyses D-ribulose 1,5-bisphosphate + O2 = 2-phosphoglycolate + (2R)-3-phosphoglycerate + 2 H(+). In terms of biological role, ruBisCO catalyzes two reactions: the carboxylation of D-ribulose 1,5-bisphosphate, the primary event in carbon dioxide fixation, as well as the oxidative fragmentation of the pentose substrate in the photorespiration process. Both reactions occur simultaneously and in competition at the same active site. This Fagopyrum esculentum subsp. ancestrale (Wild buckwheat) protein is Ribulose bisphosphate carboxylase large chain.